Reading from the N-terminus, the 239-residue chain is Ribonuclease 3 (239 aa).

The RNase III domain occupies 18–141; the sequence is YTTLEKALGY…LMAGVYLEAG (124 aa). E54 contributes to the Mg(2+) binding site. D58 is a catalytic residue. S127 and E130 together coordinate Mg(2+). The active site involves E130. The DRBM domain maps to 168-237; it reads DYKTALQELT…AYQALQKLKE (70 aa).

This sequence belongs to the ribonuclease III family. In terms of assembly, homodimer. The cofactor is Mg(2+).

It localises to the cytoplasm. The catalysed reaction is Endonucleolytic cleavage to 5'-phosphomonoester.. Digests double-stranded RNA. Involved in the processing of primary rRNA transcript to yield the immediate precursors to the large and small rRNAs (23S and 16S). Processes some mRNAs, and tRNAs when they are encoded in the rRNA operon. Processes pre-crRNA and tracrRNA of type II CRISPR loci if present in the organism. The protein is Ribonuclease 3 of Helicobacter pylori (strain ATCC 700392 / 26695) (Campylobacter pylori).